A 569-amino-acid chain; its full sequence is Urease subunit alpha (569 aa).

The 439-residue stretch at 131-569 (GGIDTHIHFI…LPLAQRYLLL (439 aa)) folds into the Urease domain. Residues H136, H138, and K219 each coordinate Ni(2+). The residue at position 219 (K219) is an N6-carboxylysine. Residue H221 participates in substrate binding. Ni(2+) is bound by residues H248 and H274. The active-site Proton donor is the H322. Position 362 (D362) interacts with Ni(2+).

The protein belongs to the metallo-dependent hydrolases superfamily. Urease alpha subunit family. As to quaternary structure, heterotrimer of UreA (gamma), UreB (beta) and UreC (alpha) subunits. Three heterotrimers associate to form the active enzyme. The cofactor is Ni cation. In terms of processing, carboxylation allows a single lysine to coordinate two nickel ions.

It localises to the cytoplasm. The enzyme catalyses urea + 2 H2O + H(+) = hydrogencarbonate + 2 NH4(+). Its pathway is nitrogen metabolism; urea degradation; CO(2) and NH(3) from urea (urease route): step 1/1. The protein is Urease subunit alpha of Parasynechococcus marenigrum (strain WH8102).